The following is a 2586-amino-acid chain: Highly reducing polyketide synthase FUM1 (2586 aa).

The region spanning 29-451 (VLPVAIVGMG…GANAHCIIET (423 aa)) is the Ketosynthase family 3 (KS3) domain. Catalysis depends on for beta-ketoacyl synthase activity residues cysteine 201, histidine 336, and histidine 374. Residues 609–928 (IFTGQGAQWV…TESLLKLAGE (320 aa)) are malonyl-CoA:ACP transacylase (MAT) domain. Positions 980 to 1111 (HELLGSRTLE…GQVRPGQDAH (132 aa)) are N-terminal hotdog fold. The segment at 980–1269 (HELLGSRTLE…LEDGKFSPLE (290 aa)) is dehydratase (DH) domain. Positions 980–1274 (HELLGSRTLE…FSPLEMDLAE (295 aa)) constitute a PKS/mFAS DH domain. The active-site Proton acceptor; for dehydratase activity is the histidine 1012. The tract at residues 1125-1274 (QHYPRLVDNL…FSPLEMDLAE (150 aa)) is C-terminal hotdog fold. Aspartate 1186 acts as the Proton donor; for dehydratase activity in catalysis. Positions 1450–1627 (DFFATAGHTR…GFSGVDSAIY (178 aa)) are methyltransferase (CMet) domain. Residues 1862 to 2172 (GLLQTLGWVP…KGVHLGKIVV (311 aa)) are enoyl reductase (ER) (ER) domain. The ketoreductase (KR) domain stretch occupies residues 2197 to 2373 (ASYLLVGGLG…ASVLQIGLIE (177 aa)). In terms of domain architecture, Carrier spans 2486–2565 (PATVELVTNE…GLARLTVDGL (80 aa)). Serine 2524 is subject to O-(pantetheine 4'-phosphoryl)serine.

The protein operates within mycotoxin biosynthesis. Its function is as follows. Highly reducing polyketide synthase; part of the gene cluster that mediates the biosynthesis of fumonisins B1 (FB1), B2 (FB2), B3 (FB3), and B4 (FB4), which are carcinogenic mycotoxins. The biosynthesis starts with the FUM1-catalyzed carbon chain assembly from one molecule of acetyl-CoA, eight molecules of malonyl-CoA, and two molecules of methionine (in S-adenosyl form). The C18 polyketide chain is released from the enzyme by a nucleophilic attack of a carbanion, which is derived from R-carbon of alanine by decarboxylation, on the carbonyl carbon of polyketide acyl chain. This step is catalyzed by the pyridoxal 5'-phosphate-dependent aminoacyl transferase FUM8. The resultant 3-keto intermediate is then stereospecifically reduced to a 3-hydroxyl product by reductase FUM13. Subsequent oxidations at C-10 by the cytochrome P450 monooxygenase FUM2, C-14 and C-15 by FUM6, FUM12 or FUM15, tricarballylic esterification of the hydroxyl groups on C-14 and C-15 by acyltransferase FUM14, and C-5 hydroxylation by 2-keto-glutarate-dependent dioxygenase FUM3 furnish the biosynthesis of fumonisins. The tricarballylic moieties are most likely derived from the citric acid cycle, and their addition to the carbon backbone may involve FUM7, FUM10, FUM11 and FUM14. In Gibberella moniliformis (strain M3125 / FGSC 7600) (Maize ear and stalk rot fungus), this protein is Highly reducing polyketide synthase FUM1.